Consider the following 335-residue polypeptide: Glycerol-3-phosphate dehydrogenase [NAD(P)+] (335 aa).

4 residues coordinate NADPH: Ser-10, Phe-11, Arg-31, and Lys-105. Sn-glycerol 3-phosphate contacts are provided by Lys-105, Gly-136, and Ser-138. Residue Ala-140 coordinates NADPH. Sn-glycerol 3-phosphate is bound by residues Lys-191, Asp-244, Ser-254, Arg-255, and Asn-256. Lys-191 acts as the Proton acceptor in catalysis. Residue Arg-255 coordinates NADPH. 2 residues coordinate NADPH: Val-279 and Glu-281.

This sequence belongs to the NAD-dependent glycerol-3-phosphate dehydrogenase family.

The protein resides in the cytoplasm. It carries out the reaction sn-glycerol 3-phosphate + NAD(+) = dihydroxyacetone phosphate + NADH + H(+). It catalyses the reaction sn-glycerol 3-phosphate + NADP(+) = dihydroxyacetone phosphate + NADPH + H(+). The protein operates within membrane lipid metabolism; glycerophospholipid metabolism. Its function is as follows. Catalyzes the reduction of the glycolytic intermediate dihydroxyacetone phosphate (DHAP) to sn-glycerol 3-phosphate (G3P), the key precursor for phospholipid synthesis. The chain is Glycerol-3-phosphate dehydrogenase [NAD(P)+] from Leptospira interrogans serogroup Icterohaemorrhagiae serovar Lai (strain 56601).